The chain runs to 71 residues: DNA-directed RNA polymerase subunit omega (71 aa).

It belongs to the RNA polymerase subunit omega family. The RNAP catalytic core consists of 2 alpha, 1 beta, 1 beta' and 1 omega subunit. When a sigma factor is associated with the core the holoenzyme is formed, which can initiate transcription.

The catalysed reaction is RNA(n) + a ribonucleoside 5'-triphosphate = RNA(n+1) + diphosphate. In terms of biological role, promotes RNA polymerase assembly. Latches the N- and C-terminal regions of the beta' subunit thereby facilitating its interaction with the beta and alpha subunits. This Alkaliphilus oremlandii (strain OhILAs) (Clostridium oremlandii (strain OhILAs)) protein is DNA-directed RNA polymerase subunit omega.